Reading from the N-terminus, the 648-residue chain is Acetyl-coenzyme A synthetase (648 aa).

CoA is bound by residues 190–193 (RGGK), Thr308, and Asn332. ATP contacts are provided by residues 384–386 (GEP), 408–413 (DTWWQT), Asp497, and Arg512. Ser520 serves as a coordination point for CoA. Arg523 provides a ligand contact to ATP. Positions 534, 536, and 539 each coordinate Mg(2+). Arg581 provides a ligand contact to CoA. Lys606 is modified (N6-acetyllysine).

This sequence belongs to the ATP-dependent AMP-binding enzyme family. Mg(2+) serves as cofactor. Acetylated. Deacetylation by the SIR2-homolog deacetylase activates the enzyme.

It carries out the reaction acetate + ATP + CoA = acetyl-CoA + AMP + diphosphate. Functionally, catalyzes the conversion of acetate into acetyl-CoA (AcCoA), an essential intermediate at the junction of anabolic and catabolic pathways. AcsA undergoes a two-step reaction. In the first half reaction, AcsA combines acetate with ATP to form acetyl-adenylate (AcAMP) intermediate. In the second half reaction, it can then transfer the acetyl group from AcAMP to the sulfhydryl group of CoA, forming the product AcCoA. This Bradyrhizobium diazoefficiens (strain JCM 10833 / BCRC 13528 / IAM 13628 / NBRC 14792 / USDA 110) protein is Acetyl-coenzyme A synthetase.